A 269-amino-acid chain; its full sequence is Troponin T, fast skeletal muscle (269 aa).

Residues 1–23 (MSDEEVEQVEEQYEEEEEAQEEA) are compositionally biased toward acidic residues. The interval 1–72 (MSDEEVEQVE…EKVDFDDIQK (72 aa)) is disordered. An N-acetylserine modification is found at Ser2. Ser2 is modified (phosphoserine). Residues 24-34 (AEVHEEVHEPE) are compositionally biased toward basic and acidic residues. A compositionally biased stretch (acidic residues) spans 35-47 (EVQEDTAEEDAEE). Positions 60-72 (PEGEKVDFDDIQK) are enriched in basic and acidic residues. Ser88 bears the Phosphoserine mark. The segment covering 111–153 (RAERAEQQRIRAEKERERQNRLAEEKARREEEDAKRRAEDDLK) has biased composition (basic and acidic residues). The tract at residues 111–158 (RAERAEQQRIRAEKERERQNRLAEEKARREEEDAKRRAEDDLKKKKAL) is disordered. Residues Ser159, Ser166, and Ser167 each carry the phosphoserine modification. Positions 245–269 (RIDQAQKHSKKAGTPAKGKVGGRWK) are disordered.

The protein belongs to the troponin T family. As to expression, in fetal and adult fast skeletal muscles, with a higher level expression in fetal than in adult muscle.

Its function is as follows. Troponin T is the tropomyosin-binding subunit of troponin, the thin filament regulatory complex which confers calcium-sensitivity to striated muscle actomyosin ATPase activity. The polypeptide is Troponin T, fast skeletal muscle (TNNT3) (Homo sapiens (Human)).